Here is a 1801-residue protein sequence, read N- to C-terminus: U3 small nucleolar RNA-associated protein 10 (1801 aa).

The next 2 membrane-spanning stretches (helical) occupy residues 102-122 (LALVGGRLLLSPAVKAVEWLI) and 136-156 (ILTFLPYYSTPVFLNLLAILP). The stretch at 581-619 (DVDVQALLPFMLIALADPSERVRSGAVDALANIGKVVDK) is one HEAT 1 repeat. Transmembrane regions (helical) follow at residues 939–959 (IQSGMSYLLSLTLGSLLAIVN) and 995–1015 (ALLLVAGLSVIAPELVLHSVM). HEAT repeat units follow at residues 1038–1076 (DQTIDQVVPALIQSLRHQKRDVVSGTSELLLSFTAAFEH), 1110–1148 (YSMDKAVLVLMTGLVSDADATVELSTYSKFLNLVGDSLK), 1244–1282 (TLTTIDFLDTIEALLKRPDDALRRKVLSLLATRLQQSPE), 1288–1327 (QTRMLDFLTVLVDIVQSSPDILLKHAAVTCIDRITEKYGK), and 1756–1794 (LALLPEMLPYISELMEDEDEGVEREVRKWVKQIEGVLGE).

Belongs to the HEATR1/UTP10 family. Component of the ribosomal small subunit (SSU) processome.

It localises to the nucleus. The protein localises to the nucleolus. The protein resides in the membrane. Its function is as follows. Involved in nucleolar processing of pre-18S ribosomal RNA. Involved in ribosome biosynthesis. The sequence is that of U3 small nucleolar RNA-associated protein 10 from Emericella nidulans (strain FGSC A4 / ATCC 38163 / CBS 112.46 / NRRL 194 / M139) (Aspergillus nidulans).